The following is a 61-amino-acid chain: Conotoxin TeAr154 (61 aa).

The N-terminal stretch at 1–19 (MHCLPVFVILLLLTASGLS) is a signal peptide. Residues 20–47 (VDARPKTEDDVPLSSFRDNTKSTLQRLL) constitute a propeptide that is removed on maturation. Glutamate 57 carries the 4-carboxyglutamate modification.

In terms of processing, contains 2 disulfide bonds that can be either 'C1-C3, C2-C4' or 'C1-C4, C2-C3', since these disulfide connectivities have been observed for conotoxins with cysteine framework V (for examples, see AC P0DQQ7 and AC P81755). Post-translationally, contains 2 disulfide bonds. Expressed by the venom duct.

It is found in the secreted. This is Conotoxin TeAr154 from Conus textile (Cloth-of-gold cone).